Here is an 892-residue protein sequence, read N- to C-terminus: DNA mismatch repair protein MutS (892 aa).

607-614 contacts ATP; it reads GPNMSGKS. The interval 833 to 854 is disordered; that stretch reads EESQLSFFGGEQSPKKQDKPVL. Over residues 845-854 the composition is skewed to basic and acidic residues; sequence SPKKQDKPVL.

The protein belongs to the DNA mismatch repair MutS family.

Functionally, this protein is involved in the repair of mismatches in DNA. It is possible that it carries out the mismatch recognition step. This protein has a weak ATPase activity. The polypeptide is DNA mismatch repair protein MutS (Bacillus cereus (strain Q1)).